A 483-amino-acid polypeptide reads, in one-letter code: uncharacterized protein (483 aa).

A WD repeat occupies I96–L137.

This is an uncharacterized protein from Schizosaccharomyces pombe (strain 972 / ATCC 24843) (Fission yeast).